Reading from the N-terminus, the 527-residue chain is Peptide chain release factor 3 (527 aa).

A tr-type G domain is found at 9-277; it reads AKRRTFAIIS…AVVNWAPMPL (269 aa). GTP contacts are provided by residues 18–25, 86–90, and 140–143; these read SHPDAGKT, DTPGH, and NKLD.

The protein belongs to the TRAFAC class translation factor GTPase superfamily. Classic translation factor GTPase family. PrfC subfamily.

It localises to the cytoplasm. Its function is as follows. Increases the formation of ribosomal termination complexes and stimulates activities of RF-1 and RF-2. It binds guanine nucleotides and has strong preference for UGA stop codons. It may interact directly with the ribosome. The stimulation of RF-1 and RF-2 is significantly reduced by GTP and GDP, but not by GMP. In Pseudomonas syringae pv. tomato (strain ATCC BAA-871 / DC3000), this protein is Peptide chain release factor 3.